Reading from the N-terminus, the 122-residue chain is Large ribosomal subunit protein eL18 (122 aa).

Belongs to the eukaryotic ribosomal protein eL18 family.

The polypeptide is Large ribosomal subunit protein eL18 (Picrophilus torridus (strain ATCC 700027 / DSM 9790 / JCM 10055 / NBRC 100828 / KAW 2/3)).